The sequence spans 98 residues: Large ribosomal subunit protein bL28 (98 aa).

The protein belongs to the bacterial ribosomal protein bL28 family.

In Rhizobium etli (strain ATCC 51251 / DSM 11541 / JCM 21823 / NBRC 15573 / CFN 42), this protein is Large ribosomal subunit protein bL28.